A 119-amino-acid chain; its full sequence is Large ribosomal subunit protein bL20 (119 aa).

Belongs to the bacterial ribosomal protein bL20 family.

Its function is as follows. Binds directly to 23S ribosomal RNA and is necessary for the in vitro assembly process of the 50S ribosomal subunit. It is not involved in the protein synthesizing functions of that subunit. In Acinetobacter baumannii (strain SDF), this protein is Large ribosomal subunit protein bL20.